Consider the following 112-residue polypeptide: K(+)/H(+) antiporter modulator KhtS (112 aa).

The segment at 42–64 (YVPMSSYPQETQSAKTPSPGSMH) is disordered. A compositionally biased stretch (polar residues) spans 47 to 60 (SYPQETQSAKTPSP).

Its subcellular location is the cell membrane. Modulates the activity of the potassium/proton antiporter KhtU. Involved in protection of the cell from methylglyoxal, a toxic by-product of glycolysis. This Bacillus subtilis (strain 168) protein is K(+)/H(+) antiporter modulator KhtS.